The chain runs to 194 residues: Phosphoheptose isomerase (194 aa).

The region spanning 37-194 (IADTFKAGGK…LIEKEMVAQG (158 aa)) is the SIS domain. Substrate is bound at residue 52 to 54 (NGG). Zn(2+) contacts are provided by H61 and E65. Substrate is bound by residues E65, 93 to 94 (ND), 119 to 121 (STS), S124, and Q172. Residues Q172 and H180 each contribute to the Zn(2+) site.

Belongs to the SIS family. GmhA subfamily. In terms of assembly, homotetramer. The cofactor is Zn(2+).

It is found in the cytoplasm. The enzyme catalyses 2 D-sedoheptulose 7-phosphate = D-glycero-alpha-D-manno-heptose 7-phosphate + D-glycero-beta-D-manno-heptose 7-phosphate. It participates in carbohydrate biosynthesis; D-glycero-D-manno-heptose 7-phosphate biosynthesis; D-glycero-alpha-D-manno-heptose 7-phosphate and D-glycero-beta-D-manno-heptose 7-phosphate from sedoheptulose 7-phosphate: step 1/1. Functionally, catalyzes the isomerization of sedoheptulose 7-phosphate in D-glycero-D-manno-heptose 7-phosphate. This chain is Phosphoheptose isomerase, found in Sodalis glossinidius (strain morsitans).